The sequence spans 179 residues: Molybdopterin synthase catalytic subunit (179 aa).

Residues 1–10 are compositionally biased toward polar residues; that stretch reads MTTSEDQTTP. The segment at 1-21 is disordered; it reads MTTSEDQTTPAHLDPKTYPRH. Substrate-binding positions include 127 to 128, lysine 143, and 150 to 152; these read HR and KRE.

It belongs to the MoaE family. MOCS2B subfamily. As to quaternary structure, heterotetramer; composed of 2 small (MOCS2A) and 2 large (MOCS2B) subunits.

The protein localises to the cytoplasm. It catalyses the reaction 2 [molybdopterin-synthase sulfur-carrier protein]-C-terminal-Gly-aminoethanethioate + cyclic pyranopterin phosphate + H2O = molybdopterin + 2 [molybdopterin-synthase sulfur-carrier protein]-C-terminal Gly-Gly + 2 H(+). Its pathway is cofactor biosynthesis; molybdopterin biosynthesis. Catalytic subunit of the molybdopterin synthase complex, a complex that catalyzes the conversion of precursor Z into molybdopterin. Acts by mediating the incorporation of 2 sulfur atoms from thiocarboxylated MOCS2A into precursor Z to generate a dithiolene group. The polypeptide is Molybdopterin synthase catalytic subunit (Aspergillus oryzae (strain ATCC 42149 / RIB 40) (Yellow koji mold)).